A 274-amino-acid chain; its full sequence is NH(3)-dependent NAD(+) synthetase (274 aa).

46–53 provides a ligand contact to ATP; it reads GISGGQDS. Asp52 lines the Mg(2+) pocket. Arg140 provides a ligand contact to deamido-NAD(+). Thr160 serves as a coordination point for ATP. Glu165 contributes to the Mg(2+) binding site. 2 residues coordinate deamido-NAD(+): Lys173 and Asp180. Lys189 and Thr211 together coordinate ATP. Residue 260–261 coordinates deamido-NAD(+); it reads HK.

It belongs to the NAD synthetase family. As to quaternary structure, homodimer.

It carries out the reaction deamido-NAD(+) + NH4(+) + ATP = AMP + diphosphate + NAD(+) + H(+). The protein operates within cofactor biosynthesis; NAD(+) biosynthesis; NAD(+) from deamido-NAD(+) (ammonia route): step 1/1. Catalyzes the ATP-dependent amidation of deamido-NAD to form NAD. Uses ammonia as a nitrogen source. The chain is NH(3)-dependent NAD(+) synthetase from Streptococcus sanguinis (strain SK36).